The sequence spans 475 residues: MSPQTETKAKVGFKAGVKDYKLTYYTPDYQTKDTDILAAFRVTPQPGVPPEEAGAAVAAESSTGTWTTVWTDGLTSLDRYKGRCYEIEPVPGEDNQFIAYVAYPLDLFEEGSVTNMFTSIVGNVFGFKALRALRLEDLRIPYAYVKTFQGPPHGIQVERDKLNKYGRPLLGCTIKPKLGLSAKNYGRAVYECLRGGLDFTKDDENVNSQPFMRWRDRFLFCAEAIYKSQAETGEIKGHYLNATAGTCEEMLKRAVFARELGVPIVMHDYLTGGFTANTTLSHYCRDNGLLLHIHRAMHAVIDRQKNHGMHFRVLAKALRLSGGDHIHAGTVVGKLEGEREITLGFVDLLRDDYIKKDRSRGIYFTQDWVSLPGVIPVASGGIHVWHMPALTEIFGDDSVLQFGGGTLGHPWGNAPGAVANRVALEACVQARNEGRDLAREGNAIIREACKWSPELAAACEVWKEIKFEFPAMDTL.

A propeptide spanning residues 1 to 2 (MS) is cleaved from the precursor. N-acetylproline is present on Pro-3. Lys-14 bears the N6,N6,N6-trimethyllysine mark. Lys-175 functions as the Proton acceptor in the catalytic mechanism. D-ribulose 1,5-bisphosphate is bound by residues Lys-175 and Lys-177. Mg(2+)-binding residues include Lys-201, Asp-203, and Glu-204. An N6-carboxylysine modification is found at Lys-201. Glu-204 contacts D-ribulose 1,5-bisphosphate. The Proton acceptor role is filled by His-294. Residues Arg-295, His-327, Lys-334, Ser-379, Gly-381, Gly-403, and Gly-404 each coordinate D-ribulose 1,5-bisphosphate.

It belongs to the RuBisCO large chain family. Type I subfamily. As to quaternary structure, heterohexadecamer of 8 large chains and 8 small chains. Heterohexadecamer; disulfide-linked. The disulfide link is formed within the large subunit homodimers. Mg(2+) serves as cofactor. In terms of processing, the disulfide bond which can form in the large chain dimeric partners within the hexadecamer appears to be associated with oxidative stress and protein turnover.

It is found in the plastid. The protein resides in the chloroplast. The enzyme catalyses 2 (2R)-3-phosphoglycerate + 2 H(+) = D-ribulose 1,5-bisphosphate + CO2 + H2O. The catalysed reaction is D-ribulose 1,5-bisphosphate + O2 = 2-phosphoglycolate + (2R)-3-phosphoglycerate + 2 H(+). In terms of biological role, ruBisCO catalyzes two reactions: the carboxylation of D-ribulose 1,5-bisphosphate, the primary event in carbon dioxide fixation, as well as the oxidative fragmentation of the pentose substrate in the photorespiration process. Both reactions occur simultaneously and in competition at the same active site. Binds to abscisic acid (ABA); only half of the possible binding sites are occupied in the crystal and there are indications this is a low affinity site. The polypeptide is Ribulose bisphosphate carboxylase large chain (Pisum sativum (Garden pea)).